Consider the following 147-residue polypeptide: Hemoglobin subunit beta (147 aa).

The region spanning 3 to 147 (HWTPEEKQYI…VAHALALGYH (145 aa)) is the Globin domain. Heme b contacts are provided by His-64 and His-93.

It belongs to the globin family. In terms of assembly, heterotetramer of two alpha-D chains and two beta chains. Red blood cells.

Functionally, involved in oxygen transport from the lung to the various peripheral tissues. This Chelonoidis niger (Galapagos giant tortoise) protein is Hemoglobin subunit beta (HBB).